The primary structure comprises 1501 residues: RE1-silencing transcription factor A (1501 aa).

Residues 158–180 form a C2H2-type 1 zinc finger; that stretch reads FRCKPCQYKAESEEEFVHHIKIH. A compositionally biased stretch (basic and acidic residues) spans 186 to 200; the sequence is VDNDSKKNPQGKEAD. The interval 186 to 209 is disordered; that stretch reads VDNDSKKNPQGKEADSSIPEESDI. 7 consecutive C2H2-type zinc fingers follow at residues 214-236, 246-268, 274-296, 302-324, 330-353, 359-381, and 387-410; these read IQCD…LKHH, YKCT…LRNH, YTCS…IRTH, YQCI…MRTH, FKCE…RQVH, LTCP…VELH, and FLCP…KSRH. Disordered regions lie at residues 491 to 514, 569 to 612, 885 to 929, and 1040 to 1079; these read SSTQ…SRKS, SFVK…SVAS, PTKV…VPGD, and VAAG…GDEQ. 2 stretches are compositionally biased toward basic and acidic residues: residues 498–512 and 594–605; these read KASE…DKSR and ITEKKEKGKQLD. A compositionally biased stretch (polar residues) spans 1067-1079; that stretch reads QPTSVQPPGGDEQ. The C2H2-type 9 zinc-finger motif lies at 1463-1485; sequence FVCIFCDRTFRKEEEYTKHLRRH.

It localises to the nucleus. It is found in the cytoplasm. Its function is as follows. Transcriptional repressor which binds neuron-restrictive silencer element (NRSE) and represses neuronal gene transcription in non-neuronal cells. Plays a role in the early development of the nervous system and is required for proper patterning of the neuroectoderm during gastrulation. This involves the correct speciation of the neuroepithelial domain and adequate development of the non-neural ectoderm. In Xenopus laevis (African clawed frog), this protein is RE1-silencing transcription factor A (rest-a).